We begin with the raw amino-acid sequence, 358 residues long: MYISKTIVFGLFVATLLVSCNADANTTQPLFPAILIFGDSTADTGNNNYYSQAVFKANHLPYGVDLPGHEANGRFSNGKLISDVISTKLNIKEFVPPFLQPNISDQDIVTGVCFASAGAGYDDETSLSSKAIPVSQQPSMFKNYIARLKGIVGDKKAMEIINNALVVISAGPNDFILNFYDIPIRRLEYPTIYGYQDFVLKRLDGFVRELYSLGCRNILVGGLPPMGCLPIQLTAKLRTILGICVEQENKDSILYNQKLVKKLPEIQASLPGSKFLYANVYDPVMDMIRNPSKYGFKETKKGCCGTGYLETSFLCTSLSKTCPNHSDHLFWDSIHPSEAAYKYLGNFIDAQIQEWLKT.

Residues 1–22 (MYISKTIVFGLFVATLLVSCNA) form the signal peptide. Asn25 is a glycosylation site (N-linked (GlcNAc...) asparagine). The active-site Nucleophile is the Ser40. 2 N-linked (GlcNAc...) asparagine glycosylation sites follow: Asn102 and Asn324. Active-site residues include Asp332 and His335.

This sequence belongs to the 'GDSL' lipolytic enzyme family.

It localises to the secreted. The chain is GDSL esterase/lipase At2g30220 from Arabidopsis thaliana (Mouse-ear cress).